The primary structure comprises 295 residues: Small ribosomal subunit protein uS2 (295 aa).

It belongs to the universal ribosomal protein uS2 family.

The chain is Small ribosomal subunit protein uS2 from Rickettsia canadensis (strain McKiel).